Here is a 421-residue protein sequence, read N- to C-terminus: Medium-chain specific acyl-CoA dehydrogenase, mitochondrial (421 aa).

The transit peptide at 1–25 directs the protein to the mitochondrion; the sequence is MAAAFRRGCRVLRSVSHFECRTQHS. Residues Lys30 and Lys69 each carry the N6-acetyllysine; alternate modification. 2 positions are modified to N6-succinyllysine; alternate: Lys30 and Lys69. The residue at position 79 (Lys79) is an N6-acetyllysine. 158-167 lines the FAD pocket; sequence YCVTEPSAGS. An octanoyl-CoA-binding site is contributed by Ser167. At Lys179 the chain carries N6-succinyllysine. 191-193 is an FAD binding site; that stretch reads WIT. An N6-acetyllysine; alternate modification is found at Lys212. Lys212 carries the N6-succinyllysine; alternate modification. Ser216 is a binding site for octanoyl-CoA. N6-acetyllysine; alternate occurs at positions 217, 235, 259, and 271. N6-succinyllysine; alternate is present on residues Lys217, Lys235, Lys259, and Lys271. Residues Asp278 and Arg281 each coordinate octanoyl-CoA. Lys301 carries the N6-acetyllysine modification. Residues 306–308 and 316–317 contribute to the FAD site; these read RKT and HQ. Residues Arg349 and Thr351 each coordinate octanoyl-CoA. At Thr351 the chain carries Phosphothreonine. FAD is bound at residue 374–378; that stretch reads QIFGG. Glu401 serves as a coordination point for octanoyl-CoA. The active-site Proton acceptor is the Glu401. Position 402–405 (402–405) interacts with FAD; the sequence is GTAQ.

This sequence belongs to the acyl-CoA dehydrogenase family. As to quaternary structure, homotetramer. Interacts with the heterodimeric electron transfer flavoprotein ETF. Requires FAD as cofactor. Acetylated. Could occur at proximity of the cofactor-binding sites and reduce the catalytic activity. Could be deacetylated by SIRT3.

Its subcellular location is the mitochondrion matrix. The enzyme catalyses a medium-chain 2,3-saturated fatty acyl-CoA + oxidized [electron-transfer flavoprotein] + H(+) = a medium-chain (2E)-enoyl-CoA + reduced [electron-transfer flavoprotein]. It carries out the reaction pentanoyl-CoA + oxidized [electron-transfer flavoprotein] + H(+) = (2E)-pentenoyl-CoA + reduced [electron-transfer flavoprotein]. The catalysed reaction is hexanoyl-CoA + oxidized [electron-transfer flavoprotein] + H(+) = (2E)-hexenoyl-CoA + reduced [electron-transfer flavoprotein]. It catalyses the reaction octanoyl-CoA + oxidized [electron-transfer flavoprotein] + H(+) = (2E)-octenoyl-CoA + reduced [electron-transfer flavoprotein]. The enzyme catalyses decanoyl-CoA + oxidized [electron-transfer flavoprotein] + H(+) = (2E)-decenoyl-CoA + reduced [electron-transfer flavoprotein]. It carries out the reaction dodecanoyl-CoA + oxidized [electron-transfer flavoprotein] + H(+) = (2E)-dodecenoyl-CoA + reduced [electron-transfer flavoprotein]. The catalysed reaction is tetradecanoyl-CoA + oxidized [electron-transfer flavoprotein] + H(+) = (2E)-tetradecenoyl-CoA + reduced [electron-transfer flavoprotein]. It catalyses the reaction oxidized [electron-transfer flavoprotein] + hexadecanoyl-CoA + H(+) = (2E)-hexadecenoyl-CoA + reduced [electron-transfer flavoprotein]. It participates in lipid metabolism; mitochondrial fatty acid beta-oxidation. Functionally, medium-chain specific acyl-CoA dehydrogenase is one of the acyl-CoA dehydrogenases that catalyze the first step of mitochondrial fatty acid beta-oxidation, an aerobic process breaking down fatty acids into acetyl-CoA and allowing the production of energy from fats. The first step of fatty acid beta-oxidation consists in the removal of one hydrogen from C-2 and C-3 of the straight-chain fatty acyl-CoA thioester, resulting in the formation of trans-2-enoyl-CoA. Electron transfer flavoprotein (ETF) is the electron acceptor that transfers electrons to the main mitochondrial respiratory chain via ETF-ubiquinone oxidoreductase (ETF dehydrogenase). Among the different mitochondrial acyl-CoA dehydrogenases, medium-chain specific acyl-CoA dehydrogenase acts specifically on acyl-CoAs with saturated 6 to 12 carbons long primary chains. The sequence is that of Medium-chain specific acyl-CoA dehydrogenase, mitochondrial from Mus musculus (Mouse).